The primary structure comprises 428 residues: Probable oxidoreductase OrdL (428 aa).

The protein is Probable oxidoreductase OrdL (ordL) of Rhizobium meliloti (strain 1021) (Ensifer meliloti).